Consider the following 229-residue polypeptide: Ribonuclease 3 (229 aa).

In terms of domain architecture, RNase III spans 4 to 133 (WEELQESVGF…FIGALYLDNG (130 aa)). Glutamate 46 lines the Mg(2+) pocket. Aspartate 50 is a catalytic residue. The Mg(2+) site is built by aspartate 119 and glutamate 122. Residue glutamate 122 is part of the active site. The region spanning 159-228 (DYKTQLQEIV…AQFAINKLIH (70 aa)) is the DRBM domain.

This sequence belongs to the ribonuclease III family. Homodimer. It depends on Mg(2+) as a cofactor.

The protein localises to the cytoplasm. It carries out the reaction Endonucleolytic cleavage to 5'-phosphomonoester.. Its function is as follows. Digests double-stranded RNA. Involved in the processing of primary rRNA transcript to yield the immediate precursors to the large and small rRNAs (23S and 16S). Processes some mRNAs, and tRNAs when they are encoded in the rRNA operon. Processes pre-crRNA and tracrRNA of type II CRISPR loci if present in the organism. The polypeptide is Ribonuclease 3 (Listeria monocytogenes serovar 1/2a (strain ATCC BAA-679 / EGD-e)).